We begin with the raw amino-acid sequence, 228 residues long: Probable septum site-determining protein MinC (228 aa).

It belongs to the MinC family. Interacts with MinD and FtsZ.

Cell division inhibitor that blocks the formation of polar Z ring septums. Rapidly oscillates between the poles of the cell to destabilize FtsZ filaments that have formed before they mature into polar Z rings. Prevents FtsZ polymerization. This is Probable septum site-determining protein MinC from Bacillus mycoides (strain KBAB4) (Bacillus weihenstephanensis).